Reading from the N-terminus, the 888-residue chain is MSQGILSPPAGLLSDEEVVVSPMFESTAADLGSVIRKDLLSDCSVISTSLEDKQVPSEDGTEKVKVYLRVRPLLPSELERQEDQGCVCIENMETLALQAPKDSFAQKSNERGIGQATHRFTFSQIFGPEVGQASFFNLTVKEMVKDVLKGQNWLIYTYGVTNSGKTYTIQGTIKDGGILPRSLALIFNSLQGQLHPTPNLKPLFSNEVMWLDSKQIRQEELKKLALLNGGLQEEELSTSLKKSVYIDSRMGTSTSFDSGIAGLSSSSQFPSSSQLDEMSHRWAQPDTVPVSVPADLRFSIWISFFEIYNELLYDLLEPPSQQRKRQTLRLCEDQNGNPYVKDLNWIHVQDAEEAWKLLKVGRKNQSFASTHLNQNSSRSHSIFSIRILHLQGEGDIIPKISELSLCDLAGSERCKDQKSGERLKEAGNINTSLHTLGRCIAALRQNQQNRSKQNLVPFRDSKLTRVFQGFFTGRGRSCMIVNVNPCASTYDETLHVAKFSAIASQLVHAPPVQLGFPSIHSFLKEHSLRASPSLETGAKTDPGLGDDIENEVDISTYGKEELLQVVEAMKALLLKERQEKLRLEVQLRDEICNEMVEQMQQREQWCSEHLDTQKELLEELYEDKLTILKESLTSFYQEELQERDEKIKELEALLQEARQQQVAHQPSGSELSLRRSQRLTSVSTQQFHEIKAKLEQCKAELNSTTEELQKYQKMLEPPPSAKPFIVDVDKKLEEGQKNIRLLRTELQKLGESLQSAERACCHNTGAGKLRQALATCDDILIKQDQTLAELQNNMTLVKLDLRKKAACIAEQYHTVLKLQGQASTKKRLGANQENQQPNQQPPGKKPFLRNLLPRTPTCQSSTDCSPYARILRSRRSPLLKSGPFGKKY.

Ser-2 carries the N-acetylserine modification. Phosphoserine occurs at positions 7, 14, and 21. Residues 63–506 (KVKVYLRVRP…AKFSAIASQL (444 aa)) enclose the Kinesin motor domain. 159–166 (GVTNSGKT) contributes to the ATP binding site. Ser-527 carries the phosphoserine; by PLK1 modification. Ser-531 is modified (phosphoserine). Coiled coils occupy residues 559–587 (KEEL…EVQL) and 630–760 (ESLT…ERAC). A phosphoserine mark is found at Ser-667, Ser-683, and Ser-823. The tract at residues 761–888 (CHNTGAGKLR…LKSGPFGKKY (128 aa)) is globular. The tract at residues 823-863 (STKKRLGANQENQQPNQQPPGKKPFLRNLLPRTPTCQSSTD) is disordered. Thr-855 is subject to Phosphothreonine. 3 positions are modified to phosphoserine: Ser-865, Ser-876, and Ser-881.

This sequence belongs to the TRAFAC class myosin-kinesin ATPase superfamily. Kinesin family. Phosphorylated by PLK1 at Ser-527 during mitosis, creating a docking site for PLK1 and recruiting PLK1 at central spindle.

It localises to the golgi apparatus. The protein localises to the cytoplasm. The protein resides in the cytoskeleton. Its subcellular location is the spindle. In terms of biological role, mitotic kinesin required for chromosome passenger complex (CPC)-mediated cytokinesis. Following phosphorylation by PLK1, involved in recruitment of PLK1 to the central spindle. Interacts with guanosine triphosphate (GTP)-bound forms of RAB6A and RAB6B. May act as a motor required for the retrograde RAB6 regulated transport of Golgi membranes and associated vesicles along microtubules. Has a microtubule plus end-directed motility. This chain is Kinesin-like protein KIF20A (KIF20A), found in Bos taurus (Bovine).